Reading from the N-terminus, the 497-residue chain is Glycerol kinase (497 aa).

Thr-11 is a binding site for ADP. Positions 11, 12, and 13 each coordinate ATP. Position 11 (Thr-11) interacts with sn-glycerol 3-phosphate. Arg-15 is an ADP binding site. Arg-81, Glu-82, Tyr-133, and Asp-242 together coordinate sn-glycerol 3-phosphate. Residues Arg-81, Glu-82, Tyr-133, Asp-242, and Gln-243 each contribute to the glycerol site. ADP is bound by residues Thr-264 and Gly-306. Positions 264, 306, 310, and 407 each coordinate ATP. Positions 407 and 411 each coordinate ADP.

It belongs to the FGGY kinase family.

It catalyses the reaction glycerol + ATP = sn-glycerol 3-phosphate + ADP + H(+). Its pathway is polyol metabolism; glycerol degradation via glycerol kinase pathway; sn-glycerol 3-phosphate from glycerol: step 1/1. Inhibited by fructose 1,6-bisphosphate (FBP). Its function is as follows. Key enzyme in the regulation of glycerol uptake and metabolism. Catalyzes the phosphorylation of glycerol to yield sn-glycerol 3-phosphate. The chain is Glycerol kinase from Alcanivorax borkumensis (strain ATCC 700651 / DSM 11573 / NCIMB 13689 / SK2).